Consider the following 107-residue polypeptide: UPF0145 protein BVU_2335 (107 aa).

The protein belongs to the UPF0145 family.

The protein is UPF0145 protein BVU_2335 of Phocaeicola vulgatus (strain ATCC 8482 / DSM 1447 / JCM 5826 / CCUG 4940 / NBRC 14291 / NCTC 11154) (Bacteroides vulgatus).